The primary structure comprises 315 residues: Phosphate transport system permease protein PstC (315 aa).

The Cytoplasmic portion of the chain corresponds to 1-22 (MLTKSRKYFNQTWIESLFKQTT). Residues 23-43 (ALFALLVFILLAAILISLVIG) traverse the membrane as a helical segment. The Periplasmic segment spans residues 44-77 (SWESIKRFGGSFLLETYWDPVQEQYGAIIPILGT). The region spanning 74–302 (ILGTLITAGI…VITTMVLILS (229 aa)) is the ABC transmembrane type-1 domain. Residues 78–98 (LITAGIALFIAVPISFGIAIF) traverse the membrane as a helical segment. At 99–117 (LTELAPNWLKRPISIAIEM) the chain is on the cytoplasmic side. A helical membrane pass occupies residues 118–138 (LAAIPSIIYGMWGLFVFVPLF). The Periplasmic portion of the chain corresponds to 139-164 (QEHIQPVLIDNLGNLPGLELFFSGVP). The chain crosses the membrane as a helical span at residues 165–185 (FGVGLFTAGLVLAIMIIPFIA). Topologically, residues 186 to 223 (SVMRDVFSIVPPMLKEGAYGLGATTWEVVRQVIVPHTR) are cytoplasmic. Residues 224-244 (IGLVGSVMLGLGRALGETMAI) traverse the membrane as a helical segment. At 245 to 281 (TFIIGNSFQLPNSLFSPSTSIASAIANEFNEAGGLQK) the chain is on the periplasmic side. Residues 282–302 (SALMELGLLLFVITTMVLILS) traverse the membrane as a helical segment. Over 303–315 (RLMITKMQQTKGK) the chain is Cytoplasmic.

The protein belongs to the binding-protein-dependent transport system permease family. CysTW subfamily.

The protein localises to the cell inner membrane. Functionally, part of the binding-protein-dependent transport system for phosphate; probably responsible for the translocation of the substrate across the membrane. The protein is Phosphate transport system permease protein PstC (pstC) of Haemophilus influenzae (strain ATCC 51907 / DSM 11121 / KW20 / Rd).